We begin with the raw amino-acid sequence, 185 residues long: Elongation factor P (185 aa).

This sequence belongs to the elongation factor P family.

Its subcellular location is the cytoplasm. The protein operates within protein biosynthesis; polypeptide chain elongation. Functionally, involved in peptide bond synthesis. Stimulates efficient translation and peptide-bond synthesis on native or reconstituted 70S ribosomes in vitro. Probably functions indirectly by altering the affinity of the ribosome for aminoacyl-tRNA, thus increasing their reactivity as acceptors for peptidyl transferase. The sequence is that of Elongation factor P from Clostridium tetani (strain Massachusetts / E88).